Reading from the N-terminus, the 245-residue chain is Protein-glutamine gamma-glutamyltransferase (245 aa).

It belongs to the bacillus TGase family.

It catalyses the reaction L-glutaminyl-[protein] + L-lysyl-[protein] = [protein]-L-lysyl-N(6)-5-L-glutamyl-[protein] + NH4(+). Functionally, probably plays a role in the assembly of the spore coat proteins by catalyzing epsilon-(gamma-glutamyl)lysine cross-links. In wild-type spores at 37 degrees Celsius, tgl mediates the cross-linking of GerQ in higher molecular mass forms, probably in cooperation with YabG. This Bacillus subtilis (strain 168) protein is Protein-glutamine gamma-glutamyltransferase (tgl).